The following is a 156-amino-acid chain: CKLF-like MARVEL transmembrane domain-containing protein 5 (156 aa).

One can recognise an MARVEL domain in the interval 29–146 (FLSSLKGILL…DAFKIYRTEL (118 aa)). Helical transmembrane passes span 35–55 (GILL…FTAS), 56–76 (ISAY…FLFL), 93–113 (LDFL…FAAV), and 119–139 (AAIA…YDAF).

This sequence belongs to the chemokine-like factor family.

It is found in the membrane. This is CKLF-like MARVEL transmembrane domain-containing protein 5 (Cmtm5) from Mus musculus (Mouse).